The primary structure comprises 176 residues: NAD(P)H-quinone oxidoreductase subunit J (176 aa).

It belongs to the complex I 30 kDa subunit family. In terms of assembly, NDH-1 can be composed of about 15 different subunits; different subcomplexes with different compositions have been identified which probably have different functions.

Its subcellular location is the cellular thylakoid membrane. It carries out the reaction a plastoquinone + NADH + (n+1) H(+)(in) = a plastoquinol + NAD(+) + n H(+)(out). The catalysed reaction is a plastoquinone + NADPH + (n+1) H(+)(in) = a plastoquinol + NADP(+) + n H(+)(out). Its function is as follows. NDH-1 shuttles electrons from an unknown electron donor, via FMN and iron-sulfur (Fe-S) centers, to quinones in the respiratory and/or the photosynthetic chain. The immediate electron acceptor for the enzyme in this species is believed to be plastoquinone. Couples the redox reaction to proton translocation, and thus conserves the redox energy in a proton gradient. Cyanobacterial NDH-1 also plays a role in inorganic carbon-concentration. The protein is NAD(P)H-quinone oxidoreductase subunit J of Prochlorococcus marinus (strain MIT 9515).